The following is a 164-amino-acid chain: uncharacterized protein (164 aa).

A signal peptide spans 1 to 18; it reads MILILTIIVGFLIYFVTA. An N-linked (GlcNAc...) asparagine; by host glycan is attached at Asn-88.

It belongs to the IIV-6 357R family.

This is an uncharacterized protein from Acheta domesticus (House cricket).